The following is a 357-amino-acid chain: S-adenosylmethionine:tRNA ribosyltransferase-isomerase (357 aa).

This sequence belongs to the QueA family. Monomer.

The protein localises to the cytoplasm. The enzyme catalyses 7-aminomethyl-7-carbaguanosine(34) in tRNA + S-adenosyl-L-methionine = epoxyqueuosine(34) in tRNA + adenine + L-methionine + 2 H(+). It participates in tRNA modification; tRNA-queuosine biosynthesis. Its function is as follows. Transfers and isomerizes the ribose moiety from AdoMet to the 7-aminomethyl group of 7-deazaguanine (preQ1-tRNA) to give epoxyqueuosine (oQ-tRNA). This Buchnera aphidicola subsp. Schizaphis graminum (strain Sg) protein is S-adenosylmethionine:tRNA ribosyltransferase-isomerase.